We begin with the raw amino-acid sequence, 181 residues long: ATP synthase subunit delta (181 aa).

This sequence belongs to the ATPase delta chain family. As to quaternary structure, F-type ATPases have 2 components, F(1) - the catalytic core - and F(0) - the membrane proton channel. F(1) has five subunits: alpha(3), beta(3), gamma(1), delta(1), epsilon(1). F(0) has three main subunits: a(1), b(2) and c(10-14). The alpha and beta chains form an alternating ring which encloses part of the gamma chain. F(1) is attached to F(0) by a central stalk formed by the gamma and epsilon chains, while a peripheral stalk is formed by the delta and b chains.

The protein localises to the cell inner membrane. Functionally, f(1)F(0) ATP synthase produces ATP from ADP in the presence of a proton or sodium gradient. F-type ATPases consist of two structural domains, F(1) containing the extramembraneous catalytic core and F(0) containing the membrane proton channel, linked together by a central stalk and a peripheral stalk. During catalysis, ATP synthesis in the catalytic domain of F(1) is coupled via a rotary mechanism of the central stalk subunits to proton translocation. Its function is as follows. This protein is part of the stalk that links CF(0) to CF(1). It either transmits conformational changes from CF(0) to CF(1) or is implicated in proton conduction. This chain is ATP synthase subunit delta, found in Blochmanniella pennsylvanica (strain BPEN).